Here is a 144-residue protein sequence, read N- to C-terminus: Small ribosomal subunit protein eS19A (144 aa).

Residues valine 83–lysine 102 are disordered.

It belongs to the eukaryotic ribosomal protein eS19 family. Component of the small ribosomal subunit (SSU). Mature yeast ribosomes consist of a small (40S) and a large (60S) subunit. The 40S small subunit contains 1 molecule of ribosomal RNA (18S rRNA) and at least 33 different proteins. The large 60S subunit contains 3 rRNA molecules (25S, 5.8S and 5S rRNA) and at least 46 different proteins.

It localises to the cytoplasm. The protein localises to the nucleus. Its subcellular location is the nucleolus. Its function is as follows. Component of the ribosome, a large ribonucleoprotein complex responsible for the synthesis of proteins in the cell. The small ribosomal subunit (SSU) binds messenger RNAs (mRNAs) and translates the encoded message by selecting cognate aminoacyl-transfer RNA (tRNA) molecules. The large subunit (LSU) contains the ribosomal catalytic site termed the peptidyl transferase center (PTC), which catalyzes the formation of peptide bonds, thereby polymerizing the amino acids delivered by tRNAs into a polypeptide chain. The nascent polypeptides leave the ribosome through a tunnel in the LSU and interact with protein factors that function in enzymatic processing, targeting, and the membrane insertion of nascent chains at the exit of the ribosomal tunnel. eS19 is required for proper maturation of the small (40S) ribosomal subunit. Binds to 40S pre-ribosomal particles, probably required after association of NOC4 but before association of ENP1, TSR1 and RIO2 with 20/21S pre-rRNA. The chain is Small ribosomal subunit protein eS19A (rps1901) from Schizosaccharomyces pombe (strain 972 / ATCC 24843) (Fission yeast).